The following is a 413-amino-acid chain: Serine hydroxymethyltransferase (413 aa).

Residues Leu119 and 123–125 (GHL) each bind (6S)-5,6,7,8-tetrahydrofolate. Lys228 is subject to N6-(pyridoxal phosphate)lysine. 351 to 353 (SPF) serves as a coordination point for (6S)-5,6,7,8-tetrahydrofolate.

It belongs to the SHMT family. In terms of assembly, homodimer. Requires pyridoxal 5'-phosphate as cofactor.

The protein resides in the cytoplasm. It carries out the reaction (6R)-5,10-methylene-5,6,7,8-tetrahydrofolate + glycine + H2O = (6S)-5,6,7,8-tetrahydrofolate + L-serine. The protein operates within one-carbon metabolism; tetrahydrofolate interconversion. It functions in the pathway amino-acid biosynthesis; glycine biosynthesis; glycine from L-serine: step 1/1. Its function is as follows. Catalyzes the reversible interconversion of serine and glycine with tetrahydrofolate (THF) serving as the one-carbon carrier. This reaction serves as the major source of one-carbon groups required for the biosynthesis of purines, thymidylate, methionine, and other important biomolecules. Also exhibits THF-independent aldolase activity toward beta-hydroxyamino acids, producing glycine and aldehydes, via a retro-aldol mechanism. The polypeptide is Serine hydroxymethyltransferase (Clostridium botulinum (strain Langeland / NCTC 10281 / Type F)).